The sequence spans 413 residues: 4-hydroxy-3-methylbut-2-en-1-yl diphosphate synthase (flavodoxin) (413 aa).

[4Fe-4S] cluster is bound by residues Cys-298, Cys-301, Cys-344, and Glu-351.

Belongs to the IspG family. [4Fe-4S] cluster is required as a cofactor.

It catalyses the reaction (2E)-4-hydroxy-3-methylbut-2-enyl diphosphate + oxidized [flavodoxin] + H2O + 2 H(+) = 2-C-methyl-D-erythritol 2,4-cyclic diphosphate + reduced [flavodoxin]. It functions in the pathway isoprenoid biosynthesis; isopentenyl diphosphate biosynthesis via DXP pathway; isopentenyl diphosphate from 1-deoxy-D-xylulose 5-phosphate: step 5/6. In terms of biological role, converts 2C-methyl-D-erythritol 2,4-cyclodiphosphate (ME-2,4cPP) into 1-hydroxy-2-methyl-2-(E)-butenyl 4-diphosphate. The polypeptide is 4-hydroxy-3-methylbut-2-en-1-yl diphosphate synthase (flavodoxin) (Koribacter versatilis (strain Ellin345)).